The primary structure comprises 101 residues: Small ribosomal subunit protein uS14A (101 aa).

Disordered stretches follow at residues 1–21 and 49–73; these read MAKKSKIAKNEQRKEVVAHHA and QRLPRDASPTRVRNRDAADGRPRGT. 2 stretches are compositionally biased toward basic and acidic residues: residues 8 to 21 and 61 to 70; these read AKNEQRKEVVAHHA and RNRDAADGRP.

This sequence belongs to the universal ribosomal protein uS14 family. As to quaternary structure, part of the 30S ribosomal subunit. Contacts proteins S3 and S10.

In terms of biological role, binds 16S rRNA, required for the assembly of 30S particles and may also be responsible for determining the conformation of the 16S rRNA at the A site. This is Small ribosomal subunit protein uS14A from Kineococcus radiotolerans (strain ATCC BAA-149 / DSM 14245 / SRS30216).